Reading from the N-terminus, the 414-residue chain is Deoxyuridine 5'-triphosphate nucleotidohydrolase (414 aa).

Substrate contacts are provided by residues 327 to 329 and 409 to 410; these read RSS and FG.

This sequence belongs to the dUTPase family. Requires Mg(2+) as cofactor.

It catalyses the reaction dUTP + H2O = dUMP + diphosphate + H(+). Involved in nucleotide metabolism: produces dUMP, the immediate precursor of thymidine nucleotides and decreases the intracellular concentration of dUTP to avoid uracil incorporation into viral DNA. The chain is Deoxyuridine 5'-triphosphate nucleotidohydrolase from Amazona oratrix (yellow-headed parrot).